The primary structure comprises 380 residues: Chorismate synthase (380 aa).

NADP(+)-binding residues include R40 and R46. FMN is bound by residues 128-130 (RSS), 247-248 (QA), G292, 307-311 (KPIPT), and R333.

Belongs to the chorismate synthase family. In terms of assembly, homotetramer. FMNH2 serves as cofactor.

The enzyme catalyses 5-O-(1-carboxyvinyl)-3-phosphoshikimate = chorismate + phosphate. It participates in metabolic intermediate biosynthesis; chorismate biosynthesis; chorismate from D-erythrose 4-phosphate and phosphoenolpyruvate: step 7/7. Functionally, catalyzes the anti-1,4-elimination of the C-3 phosphate and the C-6 proR hydrogen from 5-enolpyruvylshikimate-3-phosphate (EPSP) to yield chorismate, which is the branch point compound that serves as the starting substrate for the three terminal pathways of aromatic amino acid biosynthesis. This reaction introduces a second double bond into the aromatic ring system. The protein is Chorismate synthase of Alkaliphilus metalliredigens (strain QYMF).